A 437-amino-acid polypeptide reads, in one-letter code: Epsilon-sarcoglycan (437 aa).

Over 1-317 (MQLPRWWELG…LKSRDYYTDF (317 aa)) the chain is Extracellular. The N-linked (GlcNAc...) asparagine glycan is linked to Asn200. The helical transmembrane segment at 318–338 (LITLAVPSAVALVLFLILAYI) threads the bilayer. Residues 339–437 (MCCRREGVEK…QQQTTGKWYP (99 aa)) are Cytoplasmic-facing.

The protein belongs to the sarcoglycan alpha/epsilon family. N-glycosylated. Post-translationally, ubiquitinated, leading to its degradation by the proteasome. Ubiquitous.

The protein resides in the cell membrane. The protein localises to the sarcolemma. It localises to the cytoplasm. Its subcellular location is the cytoskeleton. It is found in the cell projection. The protein resides in the dendrite. The protein localises to the golgi apparatus. Component of the sarcoglycan complex, a subcomplex of the dystrophin-glycoprotein complex which forms a link between the F-actin cytoskeleton and the extracellular matrix. The polypeptide is Epsilon-sarcoglycan (SGCE) (Homo sapiens (Human)).